We begin with the raw amino-acid sequence, 241 residues long: Linker for activation of T-cells family member 1 (241 aa).

Residues 1–4 (MEAD) are Extracellular-facing. A helical; Signal-anchor for type III membrane protein membrane pass occupies residues 5–28 (ALSPVELGLLLLPFVVMLLAALCV). 2 S-palmitoyl cysteine lipidation sites follow: cysteine 27 and cysteine 30. The Cytoplasmic segment spans residues 29 to 241 (RCRELPASYD…PDYENLQELN (213 aa)). Phosphoserine is present on residues serine 41, serine 44, serine 87, serine 104, serine 109, and serine 112. The tract at residues 78-139 (QPDLLPIPRS…DDYPEGYLVV (62 aa)) is disordered. A compositionally biased stretch (polar residues) spans 97–115 (MPSSRQNSDDANSVASYEN). Acidic residues predominate over residues 124–133 (DEDEDEDDYP). Positions 136-139 (YLVV) are interaction with PLCG1. Tyrosine 175 is subject to Phosphotyrosine. Interaction with GRB2, GRAP2 and PIK3R1 stretches follow at residues 175–178 (YVNV) and 195–198 (YVNV). Phosphoserine is present on residues serine 199, serine 212, and serine 215. Residues 209–241 (ELASVTSQEVEDEEEEDVDGEEAPDYENLQELN) form a disordered region. Residues 217–233 (EVEDEEEEDVDGEEAPD) show a composition bias toward acidic residues. Tyrosine 234 bears the Phosphotyrosine mark.

In terms of assembly, when phosphorylated, interacts directly with the PIK3R1 subunit of phosphoinositide 3-kinase and the SH2 domains of GRB2, GRAP, GRAP2, PLCG1 and PLCG2. Interacts indirectly with CBL, SOS, VAV, and LCP2. Interacts with SHB, SKAP2 and CLNK. Interacts with FCGR1A. Interacts with GRB2, PLCG1 and THEMIS upon TCR activation in thymocytes. Interacts with THEMIS2. Post-translationally, phosphorylated on tyrosines by ZAP70 upon TCR activation, or by SYK upon other immunoreceptor activation; which leads to the recruitment of multiple signaling molecules. Is one of the most prominently tyrosine-phosphorylated proteins detected following TCR engagement. May be dephosphorylated by PTPRJ. In terms of processing, palmitoylation of Cys-27 and Cys-30 is required for raft targeting and efficient phosphorylation. Phosphorylated on tyrosines by ZAP70 upon TCR activation, or by SYK upon other immunoreceptor activation; which leads to the recruitment of multiple signaling molecules. Is one of the most prominently tyrosine-phosphorylated proteins detected following TCR engagement. May be dephosphorylated by PTPRJ. Phosphorylated by ITK leading to the recruitment of VAV1 to LAT-containing complexes. Post-translationally, 'Lys-63'-linked ubiquitinated by TRAF6. In terms of tissue distribution, expressed in NK cells. Present in lymph node, spleen and thymus (at protein level).

The protein resides in the cell membrane. In terms of biological role, required for TCR (T-cell antigen receptor)- and pre-TCR-mediated signaling, both in mature T-cells and during their development. Involved in FCGR3 (low affinity immunoglobulin gamma Fc region receptor III)-mediated signaling in natural killer cells and FCER1 (high affinity immunoglobulin epsilon receptor)-mediated signaling in mast cells. Couples activation of these receptors and their associated kinases with distal intracellular events such as mobilization of intracellular calcium stores, PKC activation, MAPK activation or cytoskeletal reorganization through the recruitment of PLCG1, GRB2, GRAP2, and other signaling molecules. This is Linker for activation of T-cells family member 1 (Lat) from Rattus norvegicus (Rat).